The primary structure comprises 303 residues: N-acetyl-D-glucosamine kinase (303 aa).

ATP-binding positions include 4 to 11 (GFDIGGTK) and 133 to 140 (GVGGGLIF). Residues His157, Cys177, Cys179, and Cys184 each coordinate Zn(2+).

This sequence belongs to the ROK (NagC/XylR) family. NagK subfamily.

The catalysed reaction is N-acetyl-D-glucosamine + ATP = N-acetyl-D-glucosamine 6-phosphate + ADP + H(+). It functions in the pathway cell wall biogenesis; peptidoglycan recycling. Functionally, catalyzes the phosphorylation of N-acetyl-D-glucosamine (GlcNAc) derived from cell-wall degradation, yielding GlcNAc-6-P. The protein is N-acetyl-D-glucosamine kinase of Escherichia coli O7:K1 (strain IAI39 / ExPEC).